The chain runs to 159 residues: Large ribosomal subunit protein uL23m (159 aa).

It belongs to the universal ribosomal protein uL23 family. In terms of assembly, component of the mitochondrial ribosome large subunit (39S) which comprises a 16S rRNA and about 50 distinct proteins.

It localises to the mitochondrion. This Caenorhabditis elegans protein is Large ribosomal subunit protein uL23m (mrpl-23).